We begin with the raw amino-acid sequence, 513 residues long: ATP synthase subunit alpha 1 (513 aa).

169–176 (GDRQCGKT) lines the ATP pocket.

This sequence belongs to the ATPase alpha/beta chains family. As to quaternary structure, F-type ATPases have 2 components, CF(1) - the catalytic core - and CF(0) - the membrane proton channel. CF(1) has five subunits: alpha(3), beta(3), gamma(1), delta(1), epsilon(1). CF(0) has three main subunits: a(1), b(2) and c(9-12). The alpha and beta chains form an alternating ring which encloses part of the gamma chain. CF(1) is attached to CF(0) by a central stalk formed by the gamma and epsilon chains, while a peripheral stalk is formed by the delta and b chains.

The protein localises to the cell inner membrane. The catalysed reaction is ATP + H2O + 4 H(+)(in) = ADP + phosphate + 5 H(+)(out). Functionally, produces ATP from ADP in the presence of a proton gradient across the membrane. The alpha chain is a regulatory subunit. The protein is ATP synthase subunit alpha 1 of Burkholderia pseudomallei (strain 1710b).